Reading from the N-terminus, the 132-residue chain is Large ribosomal subunit protein bL21 (132 aa).

The tract at residues 112–132 (AEKPARKPRAKKTNEVTTDGA) is disordered.

Belongs to the bacterial ribosomal protein bL21 family. Part of the 50S ribosomal subunit. Contacts protein L20.

Functionally, this protein binds to 23S rRNA in the presence of protein L20. This chain is Large ribosomal subunit protein bL21, found in Dehalococcoides mccartyi (strain ATCC BAA-2266 / KCTC 15142 / 195) (Dehalococcoides ethenogenes (strain 195)).